The following is a 225-amino-acid chain: Small ribosomal subunit protein uS3 (225 aa).

Residues 38-106 (LRAHLRRKLS…DVALNIVEIR (69 aa)) enclose the KH type-2 domain.

Belongs to the universal ribosomal protein uS3 family. As to quaternary structure, part of the 30S ribosomal subunit. Forms a tight complex with proteins S10 and S14.

Binds the lower part of the 30S subunit head. Binds mRNA in the 70S ribosome, positioning it for translation. The sequence is that of Small ribosomal subunit protein uS3 from Gluconacetobacter diazotrophicus (strain ATCC 49037 / DSM 5601 / CCUG 37298 / CIP 103539 / LMG 7603 / PAl5).